We begin with the raw amino-acid sequence, 188 residues long: Elongation factor P (188 aa).

The protein belongs to the elongation factor P family.

The protein resides in the cytoplasm. It participates in protein biosynthesis; polypeptide chain elongation. Involved in peptide bond synthesis. Stimulates efficient translation and peptide-bond synthesis on native or reconstituted 70S ribosomes in vitro. Probably functions indirectly by altering the affinity of the ribosome for aminoacyl-tRNA, thus increasing their reactivity as acceptors for peptidyl transferase. The chain is Elongation factor P from Sulfurovum sp. (strain NBC37-1).